The following is a 130-amino-acid chain: Glutamate-rich protein 4 (130 aa).

Over residues Glu91 to Gln104 the composition is skewed to acidic residues. Positions Glu91–Ile130 are disordered. Residues Glu105–Glu116 show a composition bias toward basic and acidic residues.

The sequence is that of Glutamate-rich protein 4 (ERICH4) from Homo sapiens (Human).